A 208-amino-acid chain; its full sequence is Uracil phosphoribosyltransferase (208 aa).

Residues Arg78, Arg103, and 130 to 138 contribute to the 5-phospho-alpha-D-ribose 1-diphosphate site; that span reads DPMLATGGS. Uracil is bound by residues Ile193 and 198–200; that span reads GDA. Asp199 provides a ligand contact to 5-phospho-alpha-D-ribose 1-diphosphate.

The protein belongs to the UPRTase family. Requires Mg(2+) as cofactor.

It catalyses the reaction UMP + diphosphate = 5-phospho-alpha-D-ribose 1-diphosphate + uracil. Its pathway is pyrimidine metabolism; UMP biosynthesis via salvage pathway; UMP from uracil: step 1/1. Its activity is regulated as follows. Allosterically activated by GTP. In terms of biological role, catalyzes the conversion of uracil and 5-phospho-alpha-D-ribose 1-diphosphate (PRPP) to UMP and diphosphate. This is Uracil phosphoribosyltransferase from Actinobacillus pleuropneumoniae serotype 5b (strain L20).